Reading from the N-terminus, the 1324-residue chain is Sal-like protein 1 (1324 aa).

The tract at residues 1-42 (MSRRKQAKPQHFQSDPEVASLPRRDGDTEKGQPSRPTKSKDA) is disordered. Residues 22–42 (PRRDGDTEKGQPSRPTKSKDA) are compositionally biased toward basic and acidic residues. A C2H2-type 1; atypical zinc finger spans residues 43 to 65 (HVCGRCCAEFFELSDLLLHKKNC). Disordered stretches follow at residues 77 to 102 (NPAS…NDTV), 108 to 127 (VDCS…SMEV), 132 to 172 (ANKS…TSAI), and 317 to 336 (PPIQ…SNSG). Basic and acidic residues predominate over residues 113-124 (LSEHNGLDREES). Residues 135–158 (SGSGTSSGSHSSTAPSSSSSSSSS) show a composition bias toward low complexity. Residues 321-336 (LPQSSSGNTIIPSNSG) show a composition bias toward polar residues. A Glycyl lysine isopeptide (Lys-Gly) (interchain with G-Cter in SUMO2) cross-link involves residue lysine 439. 2 C2H2-type zinc fingers span residues 449-471 (HKCR…LRSH) and 477-499 (FKCN…FQRH). The segment at 577–646 (PIPISHSATS…ASSSVLSSPA (70 aa)) is disordered. 3 positions are modified to phosphoserine: serine 590, serine 593, and serine 595. Positions 633 to 646 (SVPTASSSVLSSPA) are enriched in low complexity. Residues lysine 673, lysine 690, and lysine 701 each participate in a glycyl lysine isopeptide (Lys-Gly) (interchain with G-Cter in SUMO2) cross-link. C2H2-type zinc fingers lie at residues 706-728 (NECI…YRTH), 734-756 (FKCK…YSVH), and 766-788 (HSCP…IRMH). Disordered regions lie at residues 790-856 (GGQI…SSPL) and 894-963 (EGDV…LSPT). A compositionally biased stretch (polar residues) spans 802–811 (YSESMESDTG). Acidic residues predominate over residues 820–833 (DLDNFSDENMEDCP). The span at 843–856 (SADASQDSLSSSPL) shows a compositional bias: low complexity. The span at 899 to 936 (TNDSSSVGGDMESQSAGSPAISESTSSMQALSPSNSTQ) shows a compositional bias: polar residues. The span at 937–949 (EFHKSPSIEEKPQ) shows a compositional bias: basic and acidic residues. Serine 941 and serine 943 each carry phosphoserine. Residues lysine 947 and lysine 982 each participate in a glycyl lysine isopeptide (Lys-Gly) (interchain with G-Cter in SUMO2) cross-link. C2H2-type zinc fingers lie at residues 1001-1023 (TACD…YRSH) and 1029-1051 (FICT…MLTH). A Glycyl lysine isopeptide (Lys-Gly) (interchain with G-Cter in SUMO2) cross-link involves residue lysine 1086. The tract at residues 1095 to 1120 (VSPQDSKDTPTSHVPSGPLSSSATSP) is disordered. A compositionally biased stretch (polar residues) spans 1105 to 1119 (TSHVPSGPLSSSATS). 2 consecutive C2H2-type zinc fingers follow at residues 1134 to 1156 (HYCN…ERTH) and 1162 to 1184 (FACT…MGTH). Glycyl lysine isopeptide (Lys-Gly) (interchain with G-Cter in SUMO2) cross-links involve residues lysine 1219, lysine 1299, and lysine 1319.

The protein belongs to the sal C2H2-type zinc-finger protein family. As to quaternary structure, may associate with NuRD histone deacetylase complex (HDAC). Interacts with components of HDAC complex including HDAC1, HDAC2, RBBP4, RBPP7, MTA1 and MTA2. Interacts with CCNQ. Interacts with NSD2 (via PHD-type zinc fingers 1, 2 and 3). In terms of tissue distribution, highest levels in kidney. Lower levels in adult brain (enriched in corpus callosum, lower expression in substantia nigra) and liver.

Its subcellular location is the nucleus. Its function is as follows. Transcriptional repressor involved in organogenesis. Plays an essential role in ureteric bud invasion during kidney development. The polypeptide is Sal-like protein 1 (SALL1) (Homo sapiens (Human)).